The chain runs to 199 residues: Thymidine kinase (199 aa).

ATP-binding positions include 23–30 (GSMFSGKT) and 95–98 (DEAQ). Glu-96 serves as the catalytic Proton acceptor. 4 residues coordinate Zn(2+): Cys-152, Cys-155, Cys-184, and Cys-187.

Belongs to the thymidine kinase family. As to quaternary structure, homotetramer.

It localises to the cytoplasm. The catalysed reaction is thymidine + ATP = dTMP + ADP + H(+). This is Thymidine kinase from Bacteroides fragilis (strain ATCC 25285 / DSM 2151 / CCUG 4856 / JCM 11019 / LMG 10263 / NCTC 9343 / Onslow / VPI 2553 / EN-2).